Consider the following 172-residue polypeptide: MKLPNILLTGTPGVGKTTLGKELASRSGLKYVNVGDLAREGHLYDGYDEEYGCPILDEDRVVDELEPQMTEGGVIVDYHGCDFFPERWFHIVFVLRTDNGILYKRLETRGYHEKKLQDNIQCEIFQVLYEEAMASYKEEIVHQLPSNEPEQLEDNINQISKWIEQWVKDHNP.

ATP-binding residues include Gly-13, Gly-15, Lys-16, Thr-17, and Thr-18. Residues Asn-33 to Leu-56 are NMPbind. The segment at Thr-108–Asp-118 is LID. Arg-109 lines the ATP pocket.

Belongs to the adenylate kinase family. AK6 subfamily. As to quaternary structure, monomer and homodimer. Interacts with small ribosomal subunit protein uS11. Not a structural component of 43S pre-ribosomes, but transiently interacts with them by binding to uS11. Interacts with COIL (via C-terminus).

The protein resides in the cytoplasm. Its subcellular location is the nucleus. The protein localises to the nucleoplasm. It is found in the cajal body. The catalysed reaction is AMP + ATP = 2 ADP. The enzyme catalyses ATP + H2O = ADP + phosphate + H(+). Its function is as follows. Broad-specificity nucleoside monophosphate (NMP) kinase that catalyzes the reversible transfer of the terminal phosphate group between nucleoside triphosphates and monophosphates. Also has ATPase activity. Involved in the late cytoplasmic maturation steps of the 40S ribosomal particles, specifically 18S rRNA maturation. While NMP activity is not required for ribosome maturation, ATPase activity is. Associates transiently with small ribosomal subunit protein uS11. ATP hydrolysis breaks the interaction with uS11. May temporarily remove uS11 from the ribosome to enable a conformational change of the ribosomal RNA that is needed for the final maturation step of the small ribosomal subunit. Its NMP activity may have a role in nuclear energy homeostasis. May be involved in regulation of Cajal body (CB) formation. The protein is Adenylate kinase isoenzyme 6 of Rattus norvegicus (Rat).